The following is a 196-amino-acid chain: T-cell surface glycoprotein CD3 epsilon chain (196 aa).

The first 21 residues, 1 to 21 (MPSGNLWKVLGLCLLSVGAWG), serve as a signal peptide directing secretion. Residues 22 to 116 (QEDIERPDED…VCENCVEVDL (95 aa)) are Extracellular-facing. The Ig-like domain occupies 28 to 102 (PDEDTQKTFK…VGEKTSHRLY (75 aa)). A disulfide bridge connects residues C49 and C91. A helical transmembrane segment spans residues 117-137 (MAVVTIIVVDICITLGLLMVV). Residues 138-196 (YYYSKSRKAKAMPVTRGAGAGGRPRGQNRERPPPVPNPDYEPIRKGQRDLYSGLNQRGR) are Cytoplasmic-facing. Residues 150-196 (PVTRGAGAGGRPRGQNRERPPPVPNPDYEPIRKGQRDLYSGLNQRGR) form a disordered region. Positions 164–181 (QNRERPPPVPNPDYEPIR) are NUMB-binding region. In terms of domain architecture, ITAM spans 167–194 (ERPPPVPNPDYEPIRKGQRDLYSGLNQR). Residues 168 to 175 (RPPPVPNP) are proline-rich sequence. Phosphotyrosine occurs at positions 177 and 188.

As to quaternary structure, the TCR-CD3 complex is composed of a CD3D/CD3E and a CD3G/CD3E heterodimers that preferentially associate with TCRalpha and TCRbeta, respectively, to form TCRalpha/CD3E/CD3G and TCRbeta/CD3G/CD3E trimers. In turn, the hexamer interacts with CD3Z homodimer to form the TCR-CD3 complex. Alternatively, TCRalpha and TCRbeta can be replaced by TCRgamma and TCRdelta. Interacts with CD6. Interacts (via Proline-rich sequence) with NCK1; the interaction is ligand dependent but independent of tyrosine kinase activation. In terms of processing, phosphorylated on Tyr residues after T-cell receptor triggering by LCK in association with CD4/CD8.

It is found in the cell membrane. In terms of biological role, part of the TCR-CD3 complex present on T-lymphocyte cell surface that plays an essential role in adaptive immune response. When antigen presenting cells (APCs) activate T-cell receptor (TCR), TCR-mediated signals are transmitted across the cell membrane by the CD3 chains CD3D, CD3E, CD3G and CD3Z. All CD3 chains contain immunoreceptor tyrosine-based activation motifs (ITAMs) in their cytoplasmic domain. Upon TCR engagement, these motifs become phosphorylated by Src family protein tyrosine kinases LCK and FYN, resulting in the activation of downstream signaling pathways. In addition of this role of signal transduction in T-cell activation, CD3E plays an essential role in correct T-cell development. Also participates in internalization and cell surface down-regulation of TCR-CD3 complexes via endocytosis sequences present in CD3E cytosolic region. In addition to its role as a TCR coreceptor, it serves as a receptor for ITPRIPL1. Ligand recognition inhibits T-cell activation by promoting interaction with NCK1, which prevents CD3E-ZAP70 interaction and blocks the ERK-NFkB signaling cascade and calcium influx. This Sus scrofa (Pig) protein is T-cell surface glycoprotein CD3 epsilon chain (CD3E).